A 654-amino-acid polypeptide reads, in one-letter code: Protein LYK2 (654 aa).

The signal sequence occupies residues 1–25; the sequence is MAVSVSKQYMTSLVVILLFISLSSL. Residues 26 to 241 lie on the Extracellular side of the membrane; that stretch reads SPTSTSHSCD…PSKKKRSKMK (216 aa). 3 disulfide bridges follow: Cys-50-Cys-102, Cys-57-Cys-163, and Cys-100-Cys-161. N-linked (GlcNAc...) asparagine glycans are attached at residues Asn-103, Asn-170, Asn-193, and Asn-204. The stretch at 177 to 217 is one LysM; degenerate repeat; that stretch reads YPVGVRDSVSSLAVRFNTTEDAIVSANNKSGVVPLKPALIP. Positions 218–238 are disordered; it reads LDHKPEKQGSRKRNPSKKKRS. Basic residues predominate over residues 227–238; the sequence is SRKRNPSKKKRS. Residues 242–262 form a helical membrane-spanning segment; that stretch reads LMIAVSSAIAGVCGLVTLMVF. Residues 263 to 654 are Cytoplasmic-facing; that stretch reads GYLHWKKETQ…PLVKKSSIID (392 aa). Positions 324–619 constitute a Protein kinase domain; that stretch reads TPRKPVLEIY…EIAERVSRLV (296 aa). Residues 330 to 338 and Lys-368 each bind ATP; that span reads LEIYAFEEL.

Belongs to the protein kinase superfamily. Ser/Thr protein kinase family.

Its subcellular location is the cell membrane. May recognize microbe-derived N-acetylglucosamine (NAG)-containing ligands. The sequence is that of Protein LYK2 (LYK2) from Arabidopsis thaliana (Mouse-ear cress).